The following is a 60-amino-acid chain: UPF0434 protein PC1_1771 (60 aa).

This sequence belongs to the UPF0434 family.

This chain is UPF0434 protein PC1_1771, found in Pectobacterium carotovorum subsp. carotovorum (strain PC1).